We begin with the raw amino-acid sequence, 279 residues long: NADPH-dependent 7-cyano-7-deazaguanine reductase (279 aa).

86–88 lines the substrate pocket; sequence IES. Position 88–89 (88–89) interacts with NADPH; the sequence is SK. Cysteine 186 acts as the Thioimide intermediate in catalysis. Aspartate 193 serves as the catalytic Proton donor. Position 225–226 (225–226) interacts with substrate; sequence HE. Residue 254-255 coordinates NADPH; that stretch reads RG.

It belongs to the GTP cyclohydrolase I family. QueF type 2 subfamily. In terms of assembly, homodimer.

Its subcellular location is the cytoplasm. The enzyme catalyses 7-aminomethyl-7-carbaguanine + 2 NADP(+) = 7-cyano-7-deazaguanine + 2 NADPH + 3 H(+). The protein operates within tRNA modification; tRNA-queuosine biosynthesis. In terms of biological role, catalyzes the NADPH-dependent reduction of 7-cyano-7-deazaguanine (preQ0) to 7-aminomethyl-7-deazaguanine (preQ1). The protein is NADPH-dependent 7-cyano-7-deazaguanine reductase of Chromobacterium violaceum (strain ATCC 12472 / DSM 30191 / JCM 1249 / CCUG 213 / NBRC 12614 / NCIMB 9131 / NCTC 9757 / MK).